The sequence spans 621 residues: Chaperone protein HtpG (621 aa).

Positions 1–328 are a; substrate-binding; sequence MTQEKKKFDA…SEDLPLNISR (328 aa). The interval 329-544 is b; sequence ESLQHNNVLE…DTAMDIRMER (216 aa). A c region spans residues 545-621; that stretch reads FLIEQKQIAS…LNDILQKAIL (77 aa).

This sequence belongs to the heat shock protein 90 family. Homodimer.

The protein resides in the cytoplasm. Molecular chaperone. Has ATPase activity. The protein is Chaperone protein HtpG of Rickettsia typhi (strain ATCC VR-144 / Wilmington).